A 357-amino-acid chain; its full sequence is UDP-N-acetylglucosamine--N-acetylmuramyl-(pentapeptide) pyrophosphoryl-undecaprenol N-acetylglucosamine transferase (357 aa).

Residues 12–14 (TGG), N124, R163, S189, I243, 262–267 (ALTVSE), and Q288 contribute to the UDP-N-acetyl-alpha-D-glucosamine site.

Belongs to the glycosyltransferase 28 family. MurG subfamily.

Its subcellular location is the cell inner membrane. The catalysed reaction is di-trans,octa-cis-undecaprenyl diphospho-N-acetyl-alpha-D-muramoyl-L-alanyl-D-glutamyl-meso-2,6-diaminopimeloyl-D-alanyl-D-alanine + UDP-N-acetyl-alpha-D-glucosamine = di-trans,octa-cis-undecaprenyl diphospho-[N-acetyl-alpha-D-glucosaminyl-(1-&gt;4)]-N-acetyl-alpha-D-muramoyl-L-alanyl-D-glutamyl-meso-2,6-diaminopimeloyl-D-alanyl-D-alanine + UDP + H(+). The protein operates within cell wall biogenesis; peptidoglycan biosynthesis. Cell wall formation. Catalyzes the transfer of a GlcNAc subunit on undecaprenyl-pyrophosphoryl-MurNAc-pentapeptide (lipid intermediate I) to form undecaprenyl-pyrophosphoryl-MurNAc-(pentapeptide)GlcNAc (lipid intermediate II). This Pseudomonas paraeruginosa (strain DSM 24068 / PA7) (Pseudomonas aeruginosa (strain PA7)) protein is UDP-N-acetylglucosamine--N-acetylmuramyl-(pentapeptide) pyrophosphoryl-undecaprenol N-acetylglucosamine transferase.